The following is a 432-amino-acid chain: Adenylosuccinate synthetase (432 aa).

GTP is bound by residues 11–17 (GDEGKGK) and 39–41 (GHT). D12 functions as the Proton acceptor in the catalytic mechanism. Mg(2+) contacts are provided by D12 and G39. IMP is bound by residues 12–15 (DEGK), 37–40 (NAGH), T134, R148, N230, T245, and R309. H40 (proton donor) is an active-site residue. Residue 305-311 (VTTGRKR) participates in substrate binding. Residues R311, 337 to 339 (KLD), and 419 to 421 (GTG) contribute to the GTP site.

It belongs to the adenylosuccinate synthetase family. Homodimer. Mg(2+) is required as a cofactor.

The protein localises to the cytoplasm. It catalyses the reaction IMP + L-aspartate + GTP = N(6)-(1,2-dicarboxyethyl)-AMP + GDP + phosphate + 2 H(+). Its pathway is purine metabolism; AMP biosynthesis via de novo pathway; AMP from IMP: step 1/2. Functionally, plays an important role in the de novo pathway and in the salvage pathway of purine nucleotide biosynthesis. Catalyzes the first committed step in the biosynthesis of AMP from IMP. This is Adenylosuccinate synthetase from Vanderwaltozyma polyspora (strain ATCC 22028 / DSM 70294 / BCRC 21397 / CBS 2163 / NBRC 10782 / NRRL Y-8283 / UCD 57-17) (Kluyveromyces polysporus).